We begin with the raw amino-acid sequence, 228 residues long: Upstream activation factor subunit UAF30 (228 aa).

The region spanning 1-56 (MAELNDYSTMIDILLSDMDLETVTTKKVRMALKEVYAIDVESQGKAINKLIRKHLD) is the DEK-C domain. Residues 89–111 (SKRSSGEEKNDSETKGTHVEKKK) show a composition bias toward basic and acidic residues. The disordered stretch occupies residues 89-118 (SKRSSGEEKNDSETKGTHVEKKKGTVSKSP). The 77-residue stretch at 119–195 (ISTRKVTLSK…HKILASHMTE (77 aa)) folds into the SWIB/MDM2 domain. The interval 209 to 228 (VRRKEKPIVSDSEQSDTKGI) is disordered. 3 positions are modified to phosphoserine: serine 218, serine 220, and serine 223.

As to quaternary structure, component of the UAF (upstream activation factor) complex which consists of UAF30, RRN5, RRN9, RRN10, and histones H3 and H4.

Its subcellular location is the nucleus. It localises to the nucleolus. In terms of biological role, nonessential component of the UAF (upstream activation factor) complex which interacts with the upstream element of the RNA polymerase I promoter and forms a stable preinitiation complex. Together with SPT15/TBP UAF seems to stimulate basal transcription to a fully activated level. UAF30 seems to play a role in silencing transcription by RNA polymerase II. This is Upstream activation factor subunit UAF30 (UAF30) from Saccharomyces cerevisiae (strain ATCC 204508 / S288c) (Baker's yeast).